A 95-amino-acid chain; its full sequence is Large ribosomal subunit protein uL23 (95 aa).

It belongs to the universal ribosomal protein uL23 family. Part of the 50S ribosomal subunit. Contacts protein L29, and trigger factor when it is bound to the ribosome.

In terms of biological role, one of the early assembly proteins it binds 23S rRNA. One of the proteins that surrounds the polypeptide exit tunnel on the outside of the ribosome. Forms the main docking site for trigger factor binding to the ribosome. This is Large ribosomal subunit protein uL23 from Desulforapulum autotrophicum (strain ATCC 43914 / DSM 3382 / VKM B-1955 / HRM2) (Desulfobacterium autotrophicum).